The chain runs to 417 residues: Arginine biosynthesis bifunctional protein ArgJ (417 aa).

Substrate-binding residues include threonine 162, lysine 188, threonine 199, glutamate 289, asparagine 412, and serine 417. Catalysis depends on threonine 199, which acts as the Nucleophile.

The protein belongs to the ArgJ family. Heterotetramer of two alpha and two beta chains.

The protein resides in the cytoplasm. It catalyses the reaction N(2)-acetyl-L-ornithine + L-glutamate = N-acetyl-L-glutamate + L-ornithine. It carries out the reaction L-glutamate + acetyl-CoA = N-acetyl-L-glutamate + CoA + H(+). It participates in amino-acid biosynthesis; L-arginine biosynthesis; L-ornithine and N-acetyl-L-glutamate from L-glutamate and N(2)-acetyl-L-ornithine (cyclic): step 1/1. The protein operates within amino-acid biosynthesis; L-arginine biosynthesis; N(2)-acetyl-L-ornithine from L-glutamate: step 1/4. In terms of biological role, catalyzes two activities which are involved in the cyclic version of arginine biosynthesis: the synthesis of N-acetylglutamate from glutamate and acetyl-CoA as the acetyl donor, and of ornithine by transacetylation between N(2)-acetylornithine and glutamate. This Nitrobacter winogradskyi (strain ATCC 25391 / DSM 10237 / CIP 104748 / NCIMB 11846 / Nb-255) protein is Arginine biosynthesis bifunctional protein ArgJ.